The following is a 679-amino-acid chain: Methionine--tRNA ligase (679 aa).

The 'HIGH' region motif lies at 15-25; it reads PYANGPIHLGH. Cys146, Cys149, Cys159, and Cys162 together coordinate Zn(2+). The short motif at 332–336 is the 'KMSKS' region element; the sequence is KMSKS. An ATP-binding site is contributed by Lys335. In terms of domain architecture, tRNA-binding spans 578–679; that stretch reads DFAKIDLRIA…EGAQPGMKVK (102 aa).

The protein belongs to the class-I aminoacyl-tRNA synthetase family. MetG type 1 subfamily. As to quaternary structure, homodimer. Zn(2+) is required as a cofactor.

It is found in the cytoplasm. It catalyses the reaction tRNA(Met) + L-methionine + ATP = L-methionyl-tRNA(Met) + AMP + diphosphate. Its function is as follows. Is required not only for elongation of protein synthesis but also for the initiation of all mRNA translation through initiator tRNA(fMet) aminoacylation. In Shewanella pealeana (strain ATCC 700345 / ANG-SQ1), this protein is Methionine--tRNA ligase.